Here is a 537-residue protein sequence, read N- to C-terminus: O-phosphoserine--tRNA(Cys) ligase (537 aa).

Substrate contacts are provided by residues 186–188 (HMT), 231–233 (SAS), 273–274 (YY), and asparagine 317.

Belongs to the class-II aminoacyl-tRNA synthetase family. O-phosphoseryl-tRNA(Cys) synthetase subfamily. In terms of assembly, homotetramer. Interacts with SepCysS.

It carries out the reaction tRNA(Cys) + O-phospho-L-serine + ATP = O-phospho-L-seryl-tRNA(Cys) + AMP + diphosphate. Functionally, catalyzes the attachment of O-phosphoserine (Sep) to tRNA(Cys). The chain is O-phosphoserine--tRNA(Cys) ligase from Methanococcus maripaludis (strain C7 / ATCC BAA-1331).